The chain runs to 114 residues: NTGGKAPRKHIAHKQAKKSSAAAATGGVKKPHRFRPGTVALREIRRFQKSTELLIRKLPFQRLVREIASEFKNDLRFQSSAVLALQEASEAYLVGLFEDTNLAAIHAKRVTIMP.

Over residues 1–17 the composition is skewed to basic residues; it reads NTGGKAPRKHIAHKQAK. The tract at residues 1 to 32 is disordered; sequence NTGGKAPRKHIAHKQAKKSSAAAATGGVKKPH. Positions 18 to 28 are enriched in low complexity; that stretch reads KSSAAAATGGV.

This sequence belongs to the histone H3 family. As to quaternary structure, the nucleosome is a histone octamer containing two molecules each of H2A, H2B, H3 and H4 assembled in one H3-H4 heterotetramer and two H2A-H2B heterodimers. The octamer wraps approximately 147 bp of DNA.

The protein resides in the nucleus. It localises to the chromosome. Core component of nucleosome. Nucleosomes wrap and compact DNA into chromatin, limiting DNA accessibility to the cellular machineries which require DNA as a template. Histones thereby play a central role in transcription regulation, DNA repair, DNA replication and chromosomal stability. DNA accessibility is regulated via a complex set of post-translational modifications of histones, also called histone code, and nucleosome remodeling. The chain is Histone H3-7 (H3-7) from Stylonychia lemnae (Ciliate).